Reading from the N-terminus, the 130-residue chain is MKLFTGLILCSLVLGVHSQWMSFFGEAYEGAKDMWRAYSDMREANYKGADKYFHARGNYDAAQRGPGGAWAAKVISDARENIQRFTDPLFKGTTSGQGQEDSRADQAANEWGRSGKDPNHFRPAGLPDKY.

The N-terminal stretch at Met1–Ser18 is a signal peptide. At Gln19 the chain carries Pyrrolidone carboxylic acid. Positions Thr86–Tyr130 are disordered.

It belongs to the SAA family. This protein is the precursor of amyloid protein A, which is formed by the removal of residues from the C-terminal end. As to expression, expressed by the liver; secreted in plasma.

The protein resides in the secreted. In terms of biological role, major acute phase reactant. Apolipoprotein of the HDL complex. This chain is Serum amyloid A protein (SAA1), found in Bos taurus (Bovine).